The sequence spans 305 residues: Dioxygenase hkm4 (305 aa).

Fe cation is bound by residues His-140, Asp-142, and His-216.

This sequence belongs to the PhyH family. The cofactor is Fe cation.

It participates in secondary metabolite biosynthesis. Functionally, dioxygenase; part of the gene cluster that mediates the biosynthesis of hancockiamides, an unusual new family of N-cinnamoylated piperazines. The NRPS hkm10 and the NmrA-like reductase hkm9 are proposed to convert two molecules of L-Phe to the intermediary piperazine called xenocockiamide A. Xenocockiamide A is then converted to hancockiamide D via a series of hydroxylations and O-methylations. The tyrosinase hkm6 may catalyze an aromatic hydroxylation, then the 2-oxoglutarate-dependent Fe(II) dioxygenase hkm4 and the FAD-dependent phenol hydroxylase hkm7 may catalyze consecutive hydroxylations to install 2 more hydroxy groups, and the methyltransferase hkm8 probably catalyzes two methylations using 2 molecules of S-adenosyl-L-methionine (SAM). The NRPS hkm11 activates and transfers trans-cinnamate supplied by the PAL hkm12 to hancockiamide D and produces hancockiamide A. NRPS Hkm11 has the flexibility to tolerate the bulky hancockiamide G as a substrate and the absence of the acetyl-transferase hkm3 opens up the opportunity for hkm11 to introduce a second N-cinnamoyl moiety. The cytochrome P450 monooxygenase hkm5 catalyzes the methylenedioxy bridge formation, converting hancockiamide A into hancockiamide G. Hkm5 can also convert hancockiamide B into hancockiamide C, and hancockiamide D into hancockiamide H. The N-acetyltransferase hkm3 finally transfers an acetyl group to 1-N of piperazine, converting hancockiamide A into hancockiamide B and hancockiamide G into hancockiamide C. The sequence is that of Dioxygenase hkm4 from Aspergillus hancockii.